A 1088-amino-acid chain; its full sequence is RNA-directed RNA polymerase (1088 aa).

A RdRp catalytic domain is found at Leu501–Ile687.

This sequence belongs to the reoviridae RNA-directed RNA polymerase family. As to quaternary structure, interacts with VP3 (Potential). Interacts with VP2; this interaction activates VP1. Interacts with NSP5; this interaction is probably necessary for the formation of functional virus factories. Interacts with NSP2; this interaction is weak. Mg(2+) is required as a cofactor.

It is found in the virion. It catalyses the reaction RNA(n) + a ribonucleoside 5'-triphosphate = RNA(n+1) + diphosphate. In terms of biological role, RNA-directed RNA polymerase that is involved in both transcription and genome replication. Together with VP3 capping enzyme, forms an enzyme complex positioned near the channels situated at each of the five-fold vertices of the core. Following infection, the outermost layer of the virus is lost, leaving a double-layered particle (DLP) made up of the core and VP6 shell. VP1 then catalyzes the transcription of fully conservative plus-strand genomic RNAs that are extruded through the DLP's channels into the cytoplasm where they function as mRNAs for translation of viral proteins. One copy of each of the viral (+)RNAs is also recruited during core assembly, together with newly synthesized polymerase complexes and VP2. The polymerase of these novo-formed particles catalyzes the synthesis of complementary minus-strands leading to dsRNA formation. To do so, the polymerase specifically recognizes and binds 4 bases 5'-UGUG-3' in the conserved 3'-sequence of plus-strand RNA templates. VP2 presumably activates the autoinhibited VP1-RNA complex to coordinate packaging and genome replication. Once dsRNA synthesis is complete, the polymerase switches to the transcriptional mode, thus providing secondary transcription. In Homo sapiens (Human), this protein is RNA-directed RNA polymerase.